The sequence spans 69 residues: U-scoloptoxin(21)-Sm2a (69 aa).

The signal sequence occupies residues 1–21 (MFFLGFIIVCASEEQSDNRLP). The interval 46–69 (ANDPNGPGRRRRSPIVREEILRHP) is disordered. The segment covering 60-69 (IVREEILRHP) has biased composition (basic and acidic residues).

Belongs to the scoloptoxin-21 family. In terms of tissue distribution, expressed by the venom gland.

It localises to the secreted. The sequence is that of U-scoloptoxin(21)-Sm2a from Scolopendra morsitans (Tanzanian blue ringleg centipede).